Consider the following 192-residue polypeptide: dTDP-4-amino-4,6-dideoxy-D-glucose acyltransferase (192 aa).

This sequence belongs to the transferase hexapeptide repeat family.

It carries out the reaction dTDP-4-amino-4,6-dideoxy-alpha-D-glucose + acetyl-CoA = dTDP-4-acetamido-4,6-dideoxy-alpha-D-glucose + CoA + H(+). The protein operates within bacterial outer membrane biogenesis; lipopolysaccharide biosynthesis. Its function is as follows. Catalyzes the conversion of dTDP-4-amino-4,6-dideoxy-D-glucose (dTDP-D-Qui4N) to dTDP-4-acetamido-4,6-dideoxy-D-glucose (dTDP-D-Qui4NAc). The polypeptide is dTDP-4-amino-4,6-dideoxy-D-glucose acyltransferase (vioB) (Escherichia coli).